A 442-amino-acid chain; its full sequence is Putative pyrimidine permease RutG (442 aa).

At 1-57 (MAMFGFPHWQLKSTSTESGVVAPDERLPFAQTAVMGVQHAVAMFGATVLMPILMGLD) the chain is on the cytoplasmic side. A helical transmembrane segment spans residues 58-78 (PNLSILMSGIGTLLFFFITGG). Arg79 is a topological domain (periplasmic). The chain crosses the membrane as a helical span at residues 80–100 (VPSYLGSSAAFVGVVIAATGF). The Cytoplasmic portion of the chain corresponds to 101-110 (NGQGINPNIS). The chain crosses the membrane as a helical span at residues 111–131 (IALGGIIACGLVYTVIGLVVM). Residues 132–140 (KIGTRWIER) lie on the Periplasmic side of the membrane. The helical transmembrane segment at 141–161 (LMPPVVTGAVVMAIGLNLAPI) threads the bilayer. Residues 162 to 169 (AVKSVSAS) are Cytoplasmic-facing. A helical transmembrane segment spans residues 170-190 (AFDSWMAVMTVLCIGLVAVFT). Residues 191–196 (RGMIQR) lie on the Periplasmic side of the membrane. A helical transmembrane segment spans residues 197-217 (LLILVGLIVACLLYGVMTNVL). Residues 218–240 (GLGKAVDFTLVSHAAWFGLPHFS) lie on the Cytoplasmic side of the membrane. A helical transmembrane segment spans residues 241–261 (TPAFNGQAMMLIAPVAVILVA). Residues 262 to 284 (ENLGHLKAVAGMTGRNMDPYMGR) lie on the Periplasmic side of the membrane. Residues 285–305 (AFVGDGLATMLSGSVGGSGVT) form a helical membrane-spanning segment. At 306–318 (TYAENIGVMAVTK) the chain is on the cytoplasmic side. A helical transmembrane segment spans residues 319–339 (VYSTLVFVAAAVIAMLLGFSP). The Periplasmic portion of the chain corresponds to 340–347 (KFGALIHT). The chain crosses the membrane as a helical span at residues 348–368 (IPAAVIGGASIVVFGLIAVAG). The Cytoplasmic segment spans residues 369 to 385 (ARIWVQNRVDLSQNGNL). The next 2 helical transmembrane spans lie at 386 to 406 (IMVA…LGGF) and 407 to 427 (TLGG…LLSR). Topologically, residues 428 to 442 (KLVDVPPPEVVHQEP) are cytoplasmic.

It belongs to the nucleobase:cation symporter-2 (NCS2) (TC 2.A.40) family.

The protein localises to the cell inner membrane. May function as a proton-driven pyrimidine uptake system. The protein is Putative pyrimidine permease RutG (rutG) of Escherichia coli (strain K12).